A 302-amino-acid polypeptide reads, in one-letter code: 4-hydroxy-tetrahydrodipicolinate synthase (302 aa).

A pyruvate-binding site is contributed by Thr55. The active-site Proton donor/acceptor is Tyr144. The active-site Schiff-base intermediate with substrate is Lys172. Val214 provides a ligand contact to pyruvate.

Belongs to the DapA family. In terms of assembly, homotetramer; dimer of dimers.

The protein resides in the cytoplasm. It carries out the reaction L-aspartate 4-semialdehyde + pyruvate = (2S,4S)-4-hydroxy-2,3,4,5-tetrahydrodipicolinate + H2O + H(+). The protein operates within amino-acid biosynthesis; L-lysine biosynthesis via DAP pathway; (S)-tetrahydrodipicolinate from L-aspartate: step 3/4. Catalyzes the condensation of (S)-aspartate-beta-semialdehyde [(S)-ASA] and pyruvate to 4-hydroxy-tetrahydrodipicolinate (HTPA). This is 4-hydroxy-tetrahydrodipicolinate synthase from Synechococcus sp. (strain CC9311).